Reading from the N-terminus, the 137-residue chain is Large ribosomal subunit protein bL12 (137 aa).

The protein belongs to the bacterial ribosomal protein bL12 family. Homodimer. Part of the ribosomal stalk of the 50S ribosomal subunit. Forms a multimeric L10(L12)X complex, where L10 forms an elongated spine to which 2 to 4 L12 dimers bind in a sequential fashion. Binds GTP-bound translation factors.

Its function is as follows. Forms part of the ribosomal stalk which helps the ribosome interact with GTP-bound translation factors. Is thus essential for accurate translation. The sequence is that of Large ribosomal subunit protein bL12 from Synechococcus sp. (strain JA-3-3Ab) (Cyanobacteria bacterium Yellowstone A-Prime).